A 115-amino-acid chain; its full sequence is MSQIVTLKKNYQFRRVFRYGQSYATKYIVLFVLENSLNINRVGFSVGKKVGNSVTRNRVKRLLREVYRLNNPNMMQGYDLILLARFRADELDYHKCQREFIRLTKKSKLLQKNVI.

Belongs to the RnpA family. Consists of a catalytic RNA component (M1 or rnpB) and a protein subunit.

It carries out the reaction Endonucleolytic cleavage of RNA, removing 5'-extranucleotides from tRNA precursor.. In terms of biological role, RNaseP catalyzes the removal of the 5'-leader sequence from pre-tRNA to produce the mature 5'-terminus. It can also cleave other RNA substrates such as 4.5S RNA. The protein component plays an auxiliary but essential role in vivo by binding to the 5'-leader sequence and broadening the substrate specificity of the ribozyme. The chain is Ribonuclease P protein component from Natranaerobius thermophilus (strain ATCC BAA-1301 / DSM 18059 / JW/NM-WN-LF).